The primary structure comprises 448 residues: Antilisterial bacteriocin subtilosin biosynthesis protein AlbA (448 aa).

The region spanning 115–329 is the Radical SAM core domain; sequence FPMPLHATFE…EQHVIDEFKD (215 aa). Cys129, Cys133, Cys136, Cys408, Cys414, and Cys417 together coordinate [4Fe-4S] cluster.

It depends on [4Fe-4S] cluster as a cofactor.

It localises to the cytoplasm. In terms of biological role, catalyzes the formation of 3 thioether bonds during production of the sactipeptide subtilosin from SboA. In vitro the thioether bonds cannot be made in the absence of the SboA propeptide, suggesting this is the first reaction in subtilosin maturation. In vitro, in the absence of a second substrate, cleaves S-adenosyl-L-methionine into Met and 5'-dA. This is Antilisterial bacteriocin subtilosin biosynthesis protein AlbA (albA) from Bacillus subtilis (strain 168).